The sequence spans 123 residues: Large ribosomal subunit protein uL18 (123 aa).

It belongs to the universal ribosomal protein uL18 family. As to quaternary structure, part of the 50S ribosomal subunit; part of the 5S rRNA/L5/L18/L25 subcomplex. Contacts the 5S and 23S rRNAs.

Functionally, this is one of the proteins that bind and probably mediate the attachment of the 5S RNA into the large ribosomal subunit, where it forms part of the central protuberance. This is Large ribosomal subunit protein uL18 from Chlamydia abortus (strain DSM 27085 / S26/3) (Chlamydophila abortus).